Here is a 277-residue protein sequence, read N- to C-terminus: Large ribosomal subunit protein uL2 (277 aa).

The interval Thr-219–Lys-277 is disordered.

It belongs to the universal ribosomal protein uL2 family. As to quaternary structure, part of the 50S ribosomal subunit. Forms a bridge to the 30S subunit in the 70S ribosome.

One of the primary rRNA binding proteins. Required for association of the 30S and 50S subunits to form the 70S ribosome, for tRNA binding and peptide bond formation. It has been suggested to have peptidyltransferase activity; this is somewhat controversial. Makes several contacts with the 16S rRNA in the 70S ribosome. This chain is Large ribosomal subunit protein uL2, found in Clostridium botulinum (strain ATCC 19397 / Type A).